The primary structure comprises 350 residues: MVGSLIMEEDIYLDLFLDPYTIQDDFPPAMSQLFSPGVPLDMHSLPSNPETVFHPHLGGVKKASTDFSSVDLSFLPDELTQENRDQTVTGNKLASEESCRTRDRQSQLQLPDEHGSELNLNSNSSPDPQSCLCFDDAHSNQPSPETPNSNALPVALIASMMPMNPVPGFSGIVPQLQNVVSTANLACKLDLRKIALNAKNTEYNPKRFAAVIMRIREPRTTALIFSSGKVVCTGAKSEEESRLAARKYARVVQKLGFPVRFFNFKIQNMVGSCDVKFPIRLEILALTHRQFSSSYEPELFPGLIYKMVKPQVVLLIFASGKVVLTGAKERSEIYEAFENMYPILESFKKV.

Residues 82–150 (ENRDQTVTGN…QPSPETPNSN (69 aa)) form a disordered region. Residues 94-116 (ASEESCRTRDRQSQLQLPDEHGS) show a composition bias toward basic and acidic residues. Polar residues-rich tracts occupy residues 118–128 (LNLNSNSSPDP) and 139–150 (SNQPSPETPNSN).

Belongs to the TBP family. As to quaternary structure, interacts with TAF3. In terms of tissue distribution, expressed in myotubes and myofibers (at protein level). Expressed in a wide variety of tissues with highest levels in heart, lung, liver, uterus and placenta and especially the gonads. Expression is higher in the ovary than the testis, and within the ovary expression is localized to the oocytes.

It localises to the cytoplasm. Its subcellular location is the nucleus. Its function is as follows. Transcription factor required in complex with TAF3 for the differentiation of myoblasts into myocytes. The complex replaces TFIID at specific promoters at an early stage in the differentiation process. The protein is TATA box-binding protein-like 2 of Mus musculus (Mouse).